A 1112-amino-acid chain; its full sequence is DNA repair protein rad13 (1112 aa).

The segment at 1 to 95 (MGVSGLWDIL…QTIQKRQARR (95 aa)) is N-domain. Mg(2+)-binding residues include Asp-30 and Asp-77. Residues 395–414 (TDDLILQLATQQSLEENKKS) form the UIM domain. The I-domain stretch occupies residues 742-870 (KRSEKRDADE…LALEILHEFP (129 aa)). Residues Glu-777, Glu-779, Asp-798, Asp-800, and Asp-849 each coordinate Mg(2+). A disordered region spans residues 1056–1112 (KMMASKNSSDSDSDSEDNFLASLTPKTNSSSISIENLPRKTKLSTSLLKKPSKRRRK). Residues 1079–1089 (TPKTNSSSISI) show a composition bias toward polar residues.

Belongs to the XPG/RAD2 endonuclease family. XPG subfamily. The cofactor is Mg(2+).

It is found in the nucleus. In terms of biological role, single-stranded DNA endonuclease involved in excision repair of DNA damaged with UV light, bulky adducts, or cross-linking agents. Essential for the incision step of excision-repair. This Schizosaccharomyces pombe (strain 972 / ATCC 24843) (Fission yeast) protein is DNA repair protein rad13 (rad13).